The chain runs to 152 residues: MEEKTLKISKIKDGTVIDHIPSGKALRVLSILGIRDDVDYTVSVGMHVPSSKMEYKDVIKIENRSLDKNELDMISLTAPNATISIIKNYEISEKFKVELPPKLIGIIKCKNQNCITNTREPVKPEFEIVSRHPLVLRCVYCQRTMNERDVFE.

Positions 109, 114, 138, and 141 each coordinate Zn(2+).

This sequence belongs to the PyrI family. In terms of assembly, contains catalytic and regulatory chains. Zn(2+) serves as cofactor.

Involved in allosteric regulation of aspartate carbamoyltransferase. This chain is Aspartate carbamoyltransferase regulatory chain, found in Thermoplasma volcanium (strain ATCC 51530 / DSM 4299 / JCM 9571 / NBRC 15438 / GSS1).